Reading from the N-terminus, the 484-residue chain is tRNA sulfurtransferase (484 aa).

In terms of domain architecture, THUMP spans 63–167 (QGIRERLSCM…DQRLFVVHDQ (105 aa)). ATP-binding positions include 185–186 (LM), lysine 267, glycine 289, and glutamine 298. A disulfide bridge connects residues cysteine 346 and cysteine 457. The 79-residue stretch at 405–483 (ALAGQVILDI…GHANVRVYRP (79 aa)) folds into the Rhodanese domain. Cysteine 457 (cysteine persulfide intermediate) is an active-site residue.

This sequence belongs to the ThiI family.

It localises to the cytoplasm. The catalysed reaction is [ThiI sulfur-carrier protein]-S-sulfanyl-L-cysteine + a uridine in tRNA + 2 reduced [2Fe-2S]-[ferredoxin] + ATP + H(+) = [ThiI sulfur-carrier protein]-L-cysteine + a 4-thiouridine in tRNA + 2 oxidized [2Fe-2S]-[ferredoxin] + AMP + diphosphate. The enzyme catalyses [ThiS sulfur-carrier protein]-C-terminal Gly-Gly-AMP + S-sulfanyl-L-cysteinyl-[cysteine desulfurase] + AH2 = [ThiS sulfur-carrier protein]-C-terminal-Gly-aminoethanethioate + L-cysteinyl-[cysteine desulfurase] + A + AMP + 2 H(+). It functions in the pathway cofactor biosynthesis; thiamine diphosphate biosynthesis. Its function is as follows. Catalyzes the ATP-dependent transfer of a sulfur to tRNA to produce 4-thiouridine in position 8 of tRNAs, which functions as a near-UV photosensor. Also catalyzes the transfer of sulfur to the sulfur carrier protein ThiS, forming ThiS-thiocarboxylate. This is a step in the synthesis of thiazole, in the thiamine biosynthesis pathway. The sulfur is donated as persulfide by IscS. This chain is tRNA sulfurtransferase, found in Pseudomonas syringae pv. syringae (strain B728a).